A 169-amino-acid chain; its full sequence is Large ribosomal subunit protein uL15 (169 aa).

The interval 20 to 56 (GRGIGSGKGKTGGRGVKGQKARSGVSIKGFEGGQMPL) is disordered. Over residues 21–35 (RGIGSGKGKTGGRGV) the composition is skewed to gly residues.

Belongs to the universal ribosomal protein uL15 family. Part of the 50S ribosomal subunit.

Functionally, binds to the 23S rRNA. The sequence is that of Large ribosomal subunit protein uL15 from Methylorubrum extorquens (strain CM4 / NCIMB 13688) (Methylobacterium extorquens).